A 203-amino-acid polypeptide reads, in one-letter code: LexA repressor (203 aa).

A DNA-binding region (H-T-H motif) is located at residues 28–47 (IREIGDEFGITAKGAYDHLK). Residues Ser127 and Lys164 each act as for autocatalytic cleavage activity in the active site.

The protein belongs to the peptidase S24 family. As to quaternary structure, homodimer.

The catalysed reaction is Hydrolysis of Ala-|-Gly bond in repressor LexA.. Represses a number of genes involved in the response to DNA damage (SOS response), including recA and lexA. In the presence of single-stranded DNA, RecA interacts with LexA causing an autocatalytic cleavage which disrupts the DNA-binding part of LexA, leading to derepression of the SOS regulon and eventually DNA repair. The chain is LexA repressor from Leptospira interrogans serogroup Icterohaemorrhagiae serovar copenhageni (strain Fiocruz L1-130).